A 109-amino-acid chain; its full sequence is Large ribosomal subunit protein uL22 (109 aa).

This sequence belongs to the universal ribosomal protein uL22 family. As to quaternary structure, part of the 50S ribosomal subunit.

Its function is as follows. This protein binds specifically to 23S rRNA; its binding is stimulated by other ribosomal proteins, e.g. L4, L17, and L20. It is important during the early stages of 50S assembly. It makes multiple contacts with different domains of the 23S rRNA in the assembled 50S subunit and ribosome. Functionally, the globular domain of the protein is located near the polypeptide exit tunnel on the outside of the subunit, while an extended beta-hairpin is found that lines the wall of the exit tunnel in the center of the 70S ribosome. This chain is Large ribosomal subunit protein uL22, found in Paraburkholderia phymatum (strain DSM 17167 / CIP 108236 / LMG 21445 / STM815) (Burkholderia phymatum).